A 389-amino-acid chain; its full sequence is Gustatory receptor for bitter taste 22e (389 aa).

Residues 1–14 are Cytoplasmic-facing; the sequence is MFRPSGSGYRQKWT. The chain crosses the membrane as a helical span at residues 15–35; sequence GLTLKGALYGSWILGVFPFAY. Residues 36–46 are Extracellular-facing; that stretch reads DSWTRTLRRSK. A helical transmembrane segment spans residues 47 to 67; that stretch reads WLIAYGFVLNAAFILLVVTND. Over 68-142 the chain is Cytoplasmic; that stretch reads TESETPLRME…SLEECISFDR (75 aa). Residues 143 to 163 form a helical membrane-spanning segment; the sequence is FVLYKGFSVVLELVSMLVLEL. Topologically, residues 164-170 are extracellular; it reads GMSPNYS. N-linked (GlcNAc...) asparagine glycosylation occurs at Asn-168. A helical membrane pass occupies residues 171 to 191; the sequence is AQFFIGLGSLCLMLLAVLLGA. Residues 192 to 254 are Cytoplasmic-facing; sequence SHFHLAVVFV…QRLASIYDYQ (63 aa). The chain crosses the membrane as a helical span at residues 255 to 275; that stretch reads MVMVMVSFLIANVLGIYFFII. The Extracellular portion of the chain corresponds to 276–287; that stretch reads YSISLNKSLDFK. A glycan (N-linked (GlcNAc...) asparagine) is linked at Asn-281. The helical transmembrane segment at 288–308 threads the bilayer; sequence ILVFVQALVINMLDFWLNVEI. Topologically, residues 309-366 are cytoplasmic; that stretch reads CELAERTGRQTSTILKLFNDIENIDEKLERSITDFALFCSHRRLRFHHCGLFYVNYEM. A helical membrane pass occupies residues 367-387; the sequence is GFRMAITSFLYLLFLIQFDYW. The Extracellular portion of the chain corresponds to 388-389; it reads NL.

This sequence belongs to the insect chemoreceptor superfamily. Gustatory receptor (GR) family. Gr22e subfamily. Taste bristles on the labial palp, labral and cibarial sense organs, chemosensory bristles on the leg and anterior wing margin. In larvae, is expressed in neurons of the terminal external chemosensory organ and in the dorsal pharyngeal sense organ. Neurons expressing Gr22e also express Gr66a and correspond to taste neurons that mediate sensitivity to bitter compounds.

It is found in the cell membrane. Functionally, gustatory receptor which mediates acceptance or avoidance behavior, depending on its substrates. Seems to be involved in the sensing of bitter taste since it is expressed in neurons that mediate sensitivity to bitter compounds which are also avoidance-type taste neurons. The polypeptide is Gustatory receptor for bitter taste 22e (Gr22e) (Drosophila melanogaster (Fruit fly)).